Reading from the N-terminus, the 700-residue chain is Mitosis inducer protein blt1 (700 aa).

Composition is skewed to polar residues over residues 1 to 11 (MSKSAFTSKSQ) and 43 to 53 (PRSTALPNLSN). Disordered regions lie at residues 1-53 (MSKS…NLSN) and 266-293 (TNNR…SKDQ). Over residues 273-284 (GSDGSNSNFNGG) the composition is skewed to low complexity. Residues 496 to 575 (SVALDDHNRQ…LNMLQKLSMQ (80 aa)) adopt a coiled-coil conformation. Disordered stretches follow at residues 634 to 659 (FSSF…RKPS) and 671 to 700 (SSGS…SSKM). Phosphoserine is present on serine 636.

Interacts with cdr2, mid1 and sad1.

The protein resides in the cytoplasm. Its subcellular location is the cytoskeleton. Its function is as follows. At the onset of mitosis, forms a medial ring structure before the arrangement of the medial actin ring. Essential for the central positioning of the division septum before the cell divides. This Schizosaccharomyces pombe (strain 972 / ATCC 24843) (Fission yeast) protein is Mitosis inducer protein blt1 (blt1).